Consider the following 378-residue polypeptide: O-glycoside alpha-1,2-mannosyltransferase homolog 3 (378 aa).

At 1–6 the chain is on the cytoplasmic side; sequence MGIPKS. Residues 7–24 form a helical; Signal-anchor for type II membrane protein membrane-spanning segment; sequence SIYFCILLFCIISFYLQS. The Lumenal segment spans residues 25-378; that stretch reads SKDGPKELKV…AIKWLENINS (354 aa). The active-site Nucleophile is the glutamate 276.

It belongs to the glycosyltransferase 15 family.

The protein localises to the endoplasmic reticulum membrane. It localises to the golgi apparatus membrane. Functionally, probable mannosyltransferase involved in O-glycosylation of cell wall and secreted proteins. The sequence is that of O-glycoside alpha-1,2-mannosyltransferase homolog 3 (omh3) from Schizosaccharomyces pombe (strain 972 / ATCC 24843) (Fission yeast).